The following is a 248-amino-acid chain: Adenosylcobinamide-GDP ribazoletransferase (248 aa).

6 consecutive transmembrane segments (helical) span residues 34 to 54, 58 to 78, 113 to 133, 139 to 159, 185 to 205, and 227 to 247; these read LVFAPVVGLLIGGILTILFYI, FFPPGVTGILLIAAYIMLTGG, AVLAVICVVILNYALLSSIPL, ALLLFPVAGRIGSLVGAGSTV, IIYFIVSLLVLNIKGLLLAAA, and DILGAVCELNQTFFLILFYLF.

This sequence belongs to the CobS family. The cofactor is Mg(2+).

The protein resides in the cell membrane. It carries out the reaction alpha-ribazole + adenosylcob(III)inamide-GDP = adenosylcob(III)alamin + GMP + H(+). It catalyses the reaction alpha-ribazole 5'-phosphate + adenosylcob(III)inamide-GDP = adenosylcob(III)alamin 5'-phosphate + GMP + H(+). It participates in cofactor biosynthesis; adenosylcobalamin biosynthesis; adenosylcobalamin from cob(II)yrinate a,c-diamide: step 7/7. In terms of biological role, joins adenosylcobinamide-GDP and alpha-ribazole to generate adenosylcobalamin (Ado-cobalamin). Also synthesizes adenosylcobalamin 5'-phosphate from adenosylcobinamide-GDP and alpha-ribazole 5'-phosphate. The polypeptide is Adenosylcobinamide-GDP ribazoletransferase (Acetivibrio thermocellus (strain ATCC 27405 / DSM 1237 / JCM 9322 / NBRC 103400 / NCIMB 10682 / NRRL B-4536 / VPI 7372) (Clostridium thermocellum)).